The primary structure comprises 385 residues: Galactokinase (385 aa).

A substrate-binding site is contributed by 34–37 (EHTD). 124-130 (SAGLSSS) provides a ligand contact to ATP. 2 residues coordinate Mg(2+): S130 and E162. Catalysis depends on D174, which acts as the Proton acceptor. Y223 is a substrate binding site.

This sequence belongs to the GHMP kinase family. GalK subfamily.

It is found in the cytoplasm. The enzyme catalyses alpha-D-galactose + ATP = alpha-D-galactose 1-phosphate + ADP + H(+). Its pathway is carbohydrate metabolism; galactose metabolism. In terms of biological role, catalyzes the transfer of the gamma-phosphate of ATP to D-galactose to form alpha-D-galactose-1-phosphate (Gal-1-P). This chain is Galactokinase, found in Pasteurella multocida (strain Pm70).